We begin with the raw amino-acid sequence, 252 residues long: Carboxy-S-adenosyl-L-methionine synthase (252 aa).

S-adenosyl-L-methionine contacts are provided by residues Y45, 70–72 (GCS), 95–96 (DN), 127–128 (DI), N142, and R209.

The protein belongs to the class I-like SAM-binding methyltransferase superfamily. Cx-SAM synthase family. In terms of assembly, homodimer.

It carries out the reaction prephenate + S-adenosyl-L-methionine = carboxy-S-adenosyl-L-methionine + 3-phenylpyruvate + H2O. In terms of biological role, catalyzes the conversion of S-adenosyl-L-methionine (SAM) to carboxy-S-adenosyl-L-methionine (Cx-SAM). The polypeptide is Carboxy-S-adenosyl-L-methionine synthase (Pseudomonas paraeruginosa (strain DSM 24068 / PA7) (Pseudomonas aeruginosa (strain PA7))).